The following is a 187-amino-acid chain: MNYFDNKIDQFATYLQKRNNLDHIQFLQVRLGMQIIVGNFLKILVTYSISIFLSVFLYTLVTHLSYMLIRYNAHGAHAKSSILCYIQSILIFVFVPYFLINIDINFTYLLALSIIGLISVVIYAPAATKKQPIPIKLVKRKKYVSIIMYLLVMILSLIIHPFYAQFMLLGILVESITLLPIFFPKED.

Transmembrane regions (helical) follow at residues 49–69, 82–102, 106–126, 144–164, and 166–186; these read ISIF…YMLI, ILCY…LINI, FTYL…YAPA, VSII…PFYA, and FMLL…FPKE.

Belongs to the AgrB family.

It is found in the cell membrane. Essential for the production of a quorum sensing system signal molecule, the autoinducing peptide (AIP). This quorum sensing system is responsible for the regulation of the expression of virulence factor genes. Involved in the proteolytic processing of AgrD, the precursor of AIP. In Staphylococcus aureus (strain bovine RF122 / ET3-1), this protein is Accessory gene regulator protein B.